Here is a 440-residue protein sequence, read N- to C-terminus: Aspartokinase (440 aa).

Belongs to the aspartokinase family.

The catalysed reaction is L-aspartate + ATP = 4-phospho-L-aspartate + ADP. Its pathway is amino-acid biosynthesis; L-lysine biosynthesis via DAP pathway; (S)-tetrahydrodipicolinate from L-aspartate: step 1/4. It functions in the pathway amino-acid biosynthesis; L-methionine biosynthesis via de novo pathway; L-homoserine from L-aspartate: step 1/3. The protein operates within amino-acid biosynthesis; L-threonine biosynthesis; L-threonine from L-aspartate: step 1/5. This chain is Aspartokinase (lysC), found in Chlamydia pneumoniae (Chlamydophila pneumoniae).